Here is a 599-residue protein sequence, read N- to C-terminus: MGQRVDLWSEVIKSEEEDGDIPKIEAVFQRRKKPDKSSEAVNFGWLVKGARTSSVNGPKRDSWARSLSTRGRESIAVRAYVNNQPQKKAAGRKKPPIPKGKVVKAPDFQKEKEYFRDIDAFELLEESPSPNKSSTWTMGEQVVPEMPHLSTRLEKWLISKKLNHTCGPSSTLSKILENSAIHQESVCDNDAFDSLSLKTPDKSSAGNTSVFRLIPSCDENLAAEDVPVRKIKMESIDLEDELKRLSLTSDLIPTHQDFDQPILDLLSACGQMRPSNFIEAFSKFCEPESIVKIGEGTYGEAFRAGSSVCKIVPIDGDFRVNGEVQKRADELLEEVILSWTLNQLRECETTAQNLCPTYIKTQDIKLCQGPYDPILIKAWEEWDAKHGSENDHPDFPEKQCYVMFVLEHGGKDLESFVLLNFDEARSLLVQATAGLAVAEAAFEFEHRDLHWGNILLSRNNSDTLPFILEGKQVCIKTFGVQISIIDFTLSRINTGEKILFLDLTSDPYLFKGPKGDKQSETYRKMKAVTEDYWEGSFARTNVLWLIYLVDILLTKKSFERSSKHERELRSLKKRMEKYESAKEAVSDPFFSDMLMDQIS.

The 313-residue stretch at 287–599 folds into the Protein kinase domain; the sequence is PESIVKIGEG…FSDMLMDQIS (313 aa). ATP is bound by residues 293–301, Lys-310, 407–412, 448–453, and 486–488; these read IGEGTYGEA, EHGGKD, DLHWGN, and DFT. Asp-448 serves as the catalytic Proton acceptor.

The protein belongs to the protein kinase superfamily. Ser/Thr protein kinase family. Haspin subfamily. Expressed in meristems and primordia of root tips, lateral roots, shoot apex, leaves and flowers.

Its subcellular location is the cytoplasm. The protein resides in the perinuclear region. It localises to the nucleus. It is found in the chromosome. The protein localises to the cytoskeleton. Its subcellular location is the phragmoplast. The enzyme catalyses L-seryl-[protein] + ATP = O-phospho-L-seryl-[protein] + ADP + H(+). The catalysed reaction is L-threonyl-[protein] + ATP = O-phospho-L-threonyl-[protein] + ADP + H(+). Its function is as follows. Threonine-protein kinase that phosphorylates histone H3 in vitro at 'Thr-3' (H3T3ph) and 'Thr-11' (H3T11ph), but not at 'Ser-10' (H3S10ph) or 'Ser-28' (H3S28ph). Plays a role in mitotic cell division during plant growth. Threonine-protein kinase that phosphorylates histone H3 in vitro at 'Thr-3' (H3T3ph), but not at 'Thr-11' (H3T11ph), 'Ser-10' (H3S10ph) or 'Ser-28' (H3S28ph). Involved in histone H3 phosphorylation in mitotic cells. Contributes to organ and plant development, as well as embryonic patterning. This Arabidopsis thaliana (Mouse-ear cress) protein is Serine/threonine-protein kinase haspin homolog.